The following is a 298-amino-acid chain: Esterase Rv0045c (298 aa).

S122 functions as the Nucleophile in the catalytic mechanism. Active-site residues include D146 and H277.

This sequence belongs to the AB hydrolase superfamily. As to quaternary structure, monomer.

It catalyses the reaction a carboxylic ester + H2O = an alcohol + a carboxylate + H(+). The catalysed reaction is a butanoate ester + H2O = an aliphatic alcohol + butanoate + H(+). The enzyme catalyses an acetyl ester + H2O = an aliphatic alcohol + acetate + H(+). It carries out the reaction a hexanoate ester + H2O = an aliphatic alcohol + hexanoate + H(+). It catalyses the reaction a tetradecanoate ester + H2O = an aliphatic alcohol + tetradecanoate + H(+). With respect to regulation, hydrolysis of a fluorogenic ester substrate (MOAME) is allosterically inhibited by divalent transition metal cations (Cu(2+), Zn(2+), Ni(2+) and Co(2+)). Inhibition is largely due to a two order of magnitude drop in kcat, with relatively little change in KM. The thermal stability decreases with increasing concentrations of Ni(2+). Functionally, esterase likely involved in ester/lipid metabolism. Shows strong substrate selectivity toward short, straight chain alkyl esters with the highest activity toward four atom chains. The physiological substrate is unknown. Is able to hydrolyze ester bonds within a wide range of p-nitrophenyl derivatives (C2-C14) in vitro. This is Esterase Rv0045c from Mycobacterium tuberculosis (strain ATCC 25618 / H37Rv).